Consider the following 292-residue polypeptide: ATP synthase gamma chain (292 aa).

It belongs to the ATPase gamma chain family. As to quaternary structure, F-type ATPases have 2 components, CF(1) - the catalytic core - and CF(0) - the membrane proton channel. CF(1) has five subunits: alpha(3), beta(3), gamma(1), delta(1), epsilon(1). CF(0) has three main subunits: a, b and c.

The protein localises to the cell inner membrane. Functionally, produces ATP from ADP in the presence of a proton gradient across the membrane. The gamma chain is believed to be important in regulating ATPase activity and the flow of protons through the CF(0) complex. This Chlorobaculum tepidum (strain ATCC 49652 / DSM 12025 / NBRC 103806 / TLS) (Chlorobium tepidum) protein is ATP synthase gamma chain.